Here is a 519-residue protein sequence, read N- to C-terminus: Developmental regulatory protein wetA (519 aa).

6 disordered regions span residues 105 to 165 (PSRP…MRSS), 270 to 294 (PSSADDMFSSSHSSDPHSISSWQSD), 301 to 320 (LSFTPDLQGQDSQWWSPMPS), 325 to 344 (QQASYLESPTPVRTTQNVGN), 389 to 452 (SQIH…GSNK), and 470 to 495 (LTGVAPSGSSKTKARREQEARDRRRK). Residues 108–118 (PTATHALSTSP) are compositionally biased toward low complexity. A compositionally biased stretch (polar residues) spans 155–165 (QSFSPSLMRSS). Over residues 301–315 (LSFTPDLQGQDSQWW) the composition is skewed to polar residues. Residues 389–400 (SQIHNVSRSPSL) show a composition bias toward polar residues. Basic residues predominate over residues 419–428 (PTHRRTHSRK). Positions 435 to 452 (NAPKPAKASGSSSRGSNK) are enriched in low complexity.

It belongs to the wetA family.

In terms of biological role, brlA, abaA and wetA are pivotal regulators of conidiophore development and conidium maturation. They act individually and together to regulate their own expression and that of numerous other sporulation-specific genes. The chain is Developmental regulatory protein wetA from Penicillium camembertii.